We begin with the raw amino-acid sequence, 276 residues long: Ribosomal RNA large subunit methyltransferase E (276 aa).

S-adenosyl-L-methionine-binding residues include G52, F54, D72, D90, and D114. The Proton acceptor role is filled by K154. Low complexity predominate over residues 203 to 249; sequence RAAPTANATPTPTSTSTSTPTSTSTPTSTSTSTPAPTLTQTQTQTPK. Positions 203-276 are disordered; the sequence is RAAPTANATP…AKTGASRRTR (74 aa). The span at 265 to 276 shows a compositional bias: basic residues; it reads AKAKTGASRRTR.

Belongs to the class I-like SAM-binding methyltransferase superfamily. RNA methyltransferase RlmE family.

The protein localises to the cytoplasm. The enzyme catalyses uridine(2552) in 23S rRNA + S-adenosyl-L-methionine = 2'-O-methyluridine(2552) in 23S rRNA + S-adenosyl-L-homocysteine + H(+). In terms of biological role, specifically methylates the uridine in position 2552 of 23S rRNA at the 2'-O position of the ribose in the fully assembled 50S ribosomal subunit. This Anaeromyxobacter sp. (strain Fw109-5) protein is Ribosomal RNA large subunit methyltransferase E.